Consider the following 64-residue polypeptide: Bubble protein (64 aa).

Intrachain disulfides connect cysteine 3-cysteine 30, cysteine 18-cysteine 38, cysteine 28-cysteine 54, and cysteine 49-cysteine 64.

The protein localises to the secreted. May act as a toxin. May recognize a molecule or part of a molecule with a negatively charged surface potential. This chain is Bubble protein, found in Penicillium brevicompactum.